The chain runs to 109 residues: MQFLASLVSFLLVVWSVKATALPVEDRLSVHSNRDLTREREEMILKMISGLLDGSDNSLFGGEVTSMDIEEPLENKLEERAAYNALPQLPQRDRKAPCKNFFWKTFTSC.

Positions Met-1–Ser-16 are cleaved as a signal peptide. The propeptide occupies Val-17–Arg-80. A disulfide bridge links Cys-98 with Cys-109.

It belongs to the somatostatin family.

Its subcellular location is the secreted. Somatostatin inhibits the release of somatotropin. The protein is Somatostatin-2 (sst2) of Protopterus annectens (African lungfish).